A 288-amino-acid chain; its full sequence is UDP-3-O-acyl-N-acetylglucosamine deacetylase (288 aa).

H79, H236, and D240 together coordinate Zn(2+). H263 (proton donor) is an active-site residue.

It belongs to the LpxC family. Zn(2+) is required as a cofactor.

The catalysed reaction is a UDP-3-O-[(3R)-3-hydroxyacyl]-N-acetyl-alpha-D-glucosamine + H2O = a UDP-3-O-[(3R)-3-hydroxyacyl]-alpha-D-glucosamine + acetate. The protein operates within glycolipid biosynthesis; lipid IV(A) biosynthesis; lipid IV(A) from (3R)-3-hydroxytetradecanoyl-[acyl-carrier-protein] and UDP-N-acetyl-alpha-D-glucosamine: step 2/6. In terms of biological role, catalyzes the hydrolysis of UDP-3-O-myristoyl-N-acetylglucosamine to form UDP-3-O-myristoylglucosamine and acetate, the committed step in lipid A biosynthesis. The chain is UDP-3-O-acyl-N-acetylglucosamine deacetylase from Rickettsia felis (strain ATCC VR-1525 / URRWXCal2) (Rickettsia azadi).